Reading from the N-terminus, the 137-residue chain is 2-iminobutanoate/2-iminopropanoate deaminase (137 aa).

An N-acetylserine modification is found at Ser-2. N6-succinyllysine is present on residues Lys-13, Lys-60, and Lys-67. At Thr-74 the chain carries Phosphothreonine. Ser-136 carries the phosphoserine modification.

It belongs to the RutC family. As to quaternary structure, homotrimer. Interacts with YTHDF2. As to expression, expressed predominantly in liver and kidney. Lower levels in lung and brain.

The protein localises to the cytoplasm. Its subcellular location is the nucleus. It is found in the peroxisome. It localises to the mitochondrion. The catalysed reaction is 2-iminobutanoate + H2O = 2-oxobutanoate + NH4(+). It catalyses the reaction 2-iminopropanoate + H2O = pyruvate + NH4(+). In terms of biological role, catalyzes the hydrolytic deamination of enamine/imine intermediates that form during the course of normal metabolism. May facilitate the release of ammonia from these potentially toxic reactive metabolites, reducing their impact on cellular components. It may act on enamine/imine intermediates formed by several types of pyridoxal-5'-phosphate-dependent dehydratases including L-threonine dehydratase. Also promotes endoribonucleolytic cleavage of some transcripts by promoting recruitment of the ribonuclease P/MRP complex. Acts by bridging YTHDF2 and the ribonuclease P/MRP complex. RIDA/HRSP12 binds to N6-methyladenosine (m6A)-containing mRNAs containing a 5'-GGUUC-3' motif: cooperative binding of RIDA/HRSP12 and YTHDF2 to such transcripts lead to recruitment of the ribonuclease P/MRP complex and subsequent endoribonucleolytic cleavage. The protein is 2-iminobutanoate/2-iminopropanoate deaminase of Homo sapiens (Human).